The primary structure comprises 467 residues: Ribulose bisphosphate carboxylase large chain (467 aa).

Lysine 5 carries the N6,N6,N6-trimethyllysine modification. Substrate-binding residues include asparagine 114 and threonine 164. The active-site Proton acceptor is the lysine 166. Residue lysine 168 coordinates substrate. Mg(2+) is bound by residues lysine 192, aspartate 194, and glutamate 195. Lysine 192 is subject to N6-carboxylysine. The Proton acceptor role is filled by histidine 285. Substrate-binding residues include arginine 286, histidine 318, and serine 370.

It belongs to the RuBisCO large chain family. Type I subfamily. In terms of assembly, heterohexadecamer of 8 large chains and 8 small chains; disulfide-linked. The disulfide link is formed within the large subunit homodimers. It depends on Mg(2+) as a cofactor. The disulfide bond which can form in the large chain dimeric partners within the hexadecamer appears to be associated with oxidative stress and protein turnover.

The protein localises to the plastid. It localises to the chloroplast. The enzyme catalyses 2 (2R)-3-phosphoglycerate + 2 H(+) = D-ribulose 1,5-bisphosphate + CO2 + H2O. It catalyses the reaction D-ribulose 1,5-bisphosphate + O2 = 2-phosphoglycolate + (2R)-3-phosphoglycerate + 2 H(+). RuBisCO catalyzes two reactions: the carboxylation of D-ribulose 1,5-bisphosphate, the primary event in carbon dioxide fixation, as well as the oxidative fragmentation of the pentose substrate in the photorespiration process. Both reactions occur simultaneously and in competition at the same active site. The sequence is that of Ribulose bisphosphate carboxylase large chain from Eriodictyon californicum (California yerba santa).